The primary structure comprises 152 residues: UPF0756 membrane protein Helmi_09930 (152 aa).

Helical transmembrane passes span 6 to 26 (VLLI…TALA), 52 to 72 (TGLI…KVGL), 75 to 95 (VLLS…VLAT), 111 to 131 (IIVG…GIPV), and 132 to 152 (GPLM…WLSK).

The protein belongs to the UPF0756 family.

The protein localises to the cell membrane. In Heliobacterium modesticaldum (strain ATCC 51547 / Ice1), this protein is UPF0756 membrane protein Helmi_09930.